The primary structure comprises 90 residues: Small ribosomal subunit protein bS16 (90 aa).

The protein belongs to the bacterial ribosomal protein bS16 family.

This is Small ribosomal subunit protein bS16 from Lactobacillus acidophilus (strain ATCC 700396 / NCK56 / N2 / NCFM).